The chain runs to 423 residues: MGFLSPIYVLFFCFGVRVYCQYEAYRWDDDYDQEPNEDYDPEFQFHQNIEYGVPFYNNILGCAKECFCPTNFPTSMYCDNRKLKTIPIIPMHIQQLNLQFNDIEAVTANSFINATHLKEINLSHNKIKSQKIDYGVFAKLSNLQQLHLEHNNLEEFPFPLPKSLERLLLGYNEISILPTNAMDGLVNVTMLDLCYNHLSDSMLKEKTLSKMEKLMQLNLCNNRLESMPLGLPSSLMYLSLENNSISSIPDNYFDKLPKLHALRISHNKLEDIPYDIFNLSNLIELNVGHNKLKQAFYIPRNLEHLYLQNNEIESINVTMICPSPDPVHHHHLTYLRVDQNKLKEPISSYIFFCFPRIHSIYYGEQRSTNGETIQLKTQVFRSYQEEEEEDDHDSQDNTLEGQEVSDEHYNSHYYEMQEWQDTI.

The signal sequence occupies residues 1–20; sequence MGFLSPIYVLFFCFGVRVYC. Sulfotyrosine occurs at positions 22, 25, 31, 39, 51, and 77. The LRRNT domain occupies 53-91; that stretch reads VPFYNNILGCAKECFCPTNFPTSMYCDNRKLKTIPIIPM. LRR repeat units lie at residues 92 to 113, 116 to 129, 142 to 164, 165 to 184, 187 to 207, 213 to 233, 234 to 255, 258 to 279, 281 to 294, 301 to 322, and 331 to 353; these read HIQQ…SFIN, HLKE…KIKS, NLQQ…PKSL, ERLL…AMDG, NVTM…KEKT, KLMQ…GLPS, SLMY…YFDK, KLHA…IFNL, NLIE…KLKQ, NLEH…MICP, and HLTY…IFFC. Residues Asn113 and Asn121 are each glycosylated (N-linked (GlcNAc...) asparagine). An N-linked (GlcNAc...) asparagine glycan is attached at Asn187. N-linked (GlcNAc...) asparagine glycans are attached at residues Asn242 and Asn278. N-linked (GlcNAc...) asparagine glycosylation is present at Asn316. Cys321 and Cys353 are joined by a disulfide. Residues 381 to 406 are disordered; that stretch reads RSYQEEEEEDDHDSQDNTLEGQEVSD. A sulfotyrosine mark is found at Tyr413 and Tyr414.

This sequence belongs to the small leucine-rich proteoglycan (SLRP) family. SLRP class II subfamily. As to quaternary structure, binds the alpha(V)beta(3)-integrin. In terms of processing, glycosylated; contains keratan sulfate. In terms of tissue distribution, bone specific.

It is found in the secreted. It localises to the extracellular space. The protein localises to the extracellular matrix. In terms of biological role, may be implicated in biomineralization processes. Has a function in binding of osteoblasts via the alpha(V)beta(3)-integrin. The polypeptide is Osteomodulin (Omd) (Mus musculus (Mouse)).